Here is a 332-residue protein sequence, read N- to C-terminus: Glycerol-3-phosphate dehydrogenase [NAD(P)+] (332 aa).

Serine 14, tryptophan 15, arginine 35, and lysine 107 together coordinate NADPH. The sn-glycerol 3-phosphate site is built by lysine 107, glycine 137, and serine 139. Residue alanine 141 coordinates NADPH. Residues lysine 192, aspartate 245, serine 255, arginine 256, and asparagine 257 each contribute to the sn-glycerol 3-phosphate site. Lysine 192 acts as the Proton acceptor in catalysis. Residue arginine 256 participates in NADPH binding. Positions 280 and 282 each coordinate NADPH.

It belongs to the NAD-dependent glycerol-3-phosphate dehydrogenase family.

The protein localises to the cytoplasm. It catalyses the reaction sn-glycerol 3-phosphate + NAD(+) = dihydroxyacetone phosphate + NADH + H(+). The catalysed reaction is sn-glycerol 3-phosphate + NADP(+) = dihydroxyacetone phosphate + NADPH + H(+). The protein operates within membrane lipid metabolism; glycerophospholipid metabolism. In terms of biological role, catalyzes the reduction of the glycolytic intermediate dihydroxyacetone phosphate (DHAP) to sn-glycerol 3-phosphate (G3P), the key precursor for phospholipid synthesis. The sequence is that of Glycerol-3-phosphate dehydrogenase [NAD(P)+] from Desulfovibrio desulfuricans (strain ATCC 27774 / DSM 6949 / MB).